A 172-amino-acid chain; its full sequence is Ribosome maturation factor RimM (172 aa).

Residues 96 to 168 enclose the PRC barrel domain; the sequence is DGEFYYHEII…RVDVEIPEGL (73 aa).

The protein belongs to the RimM family. Binds ribosomal protein uS19.

Its subcellular location is the cytoplasm. Its function is as follows. An accessory protein needed during the final step in the assembly of 30S ribosomal subunit, possibly for assembly of the head region. Essential for efficient processing of 16S rRNA. May be needed both before and after RbfA during the maturation of 16S rRNA. It has affinity for free ribosomal 30S subunits but not for 70S ribosomes. This Streptococcus sanguinis (strain SK36) protein is Ribosome maturation factor RimM.